A 172-amino-acid polypeptide reads, in one-letter code: Xanthine-guanine phosphoribosyltransferase (172 aa).

Residues 47-48 (RG) and 106-114 (DDLVDTGKT) contribute to the 5-phospho-alpha-D-ribose 1-diphosphate site. D107 contributes to the Mg(2+) binding site. Positions 110 and 153 each coordinate guanine. D110 and I153 together coordinate xanthine. GMP-binding positions include 110-114 (DTGKT) and 152-153 (WI).

It belongs to the purine/pyrimidine phosphoribosyltransferase family. XGPT subfamily. Homotetramer. The cofactor is Mg(2+).

Its subcellular location is the cell inner membrane. The catalysed reaction is GMP + diphosphate = guanine + 5-phospho-alpha-D-ribose 1-diphosphate. The enzyme catalyses XMP + diphosphate = xanthine + 5-phospho-alpha-D-ribose 1-diphosphate. It carries out the reaction IMP + diphosphate = hypoxanthine + 5-phospho-alpha-D-ribose 1-diphosphate. Its pathway is purine metabolism; GMP biosynthesis via salvage pathway; GMP from guanine: step 1/1. The protein operates within purine metabolism; XMP biosynthesis via salvage pathway; XMP from xanthine: step 1/1. Its function is as follows. Purine salvage pathway enzyme that catalyzes the transfer of the ribosyl-5-phosphate group from 5-phospho-alpha-D-ribose 1-diphosphate (PRPP) to the N9 position of the 6-oxopurines guanine and xanthine to form the corresponding ribonucleotides GMP (guanosine 5'-monophosphate) and XMP (xanthosine 5'-monophosphate), with the release of PPi. To a lesser extent, also acts on hypoxanthine. The chain is Xanthine-guanine phosphoribosyltransferase from Rhodopseudomonas palustris (strain BisB5).